A 717-amino-acid polypeptide reads, in one-letter code: Cell division cycle protein 27 homolog A (717 aa).

A compositionally biased stretch (polar residues) spans 198–208 (TEHIPGENQQD). Disordered regions lie at residues 198–217 (TEHIPGENQQDLKIMQQPGD), 282–315 (LSAEAQEESGRRRSARIAARKKNPMSQSFGKDSH), and 342–374 (SKEATTSGQSVSDIGSSVDDEEKSNPSESSPDR). A compositionally biased stretch (basic residues) spans 293–304 (RRSARIAARKKN). A compositionally biased stretch (polar residues) spans 342–356 (SKEATTSGQSVSDIG). TPR repeat units lie at residues 421-454 (HWVLMQVGKAYFELQDYFNADSSFTLAHQKYPYA), 489-522 (PESWCAVGNCYSLRKDHDTALKMFQRAIQLNERF), 524-556 (YAHTLCGHEFAALEEFEDAERCYRKALGIDTRH), 557-590 (YNAWYGLGMTYLRQEKFEFAQHQFQLALQINPRS), 592-624 (VIMCYYGIALHESKRNDEALMMMEKAVLTDAKN), 625-658 (PLPKYYKAHILTSLGDYHKAQKVLEELKECAPQE), and 659-692 (SSVHASLGKIYNQLKQYDKAVLHFGIALDLSPSP).

It belongs to the APC3/CDC27 family. The APC/C is composed of at least 10 subunits. Interacts with APC2 and APC10.

It is found in the nucleus. It participates in protein modification; protein ubiquitination. Functionally, component of the anaphase promoting complex/cyclosome (APC/C), a cell cycle-regulated E3 ubiquitin-protein ligase complex that controls progression through mitosis and the G1 phase of the cell cycle. The APC/C complex controls several key steps in the cell cycle by mediating ubiquitination and subsequent degradation of target proteins such as cyclins. The APC/C complex is required for the female gametophyte development and is involved in several aspect of development by controlling cell division and cell elongation. Involved in the control of endoreduplication. Functionally redundant with CDC27B in the control of gametophyte development. The chain is Cell division cycle protein 27 homolog A (CDC27A) from Arabidopsis thaliana (Mouse-ear cress).